An 889-amino-acid polypeptide reads, in one-letter code: MAATAASTMSAAAAVTRRINAALRVDATSGDVAAGADGQNGRRSPVAKRVNDGGGGKDDVWVAVDEKDVCGARGGDGAARPPLFRTYKVKGSILHPYRFLILLRLIAIVAFFAWRVRHKNRDGVWLWTMSMVGDVWFGFSWVLNQLPKLSPIKRVPDLAALADRHSGDLPGVDVFVTTVDPVDEPILYTVNTILSILAADYPVDRYACYLSDDGGTLVHYEAMVEVAKFAELWVPFCRKHCVEPRSPENYFAMKTQAYKGGVPGELMSDHRRVRREYEEFKVRIDSLSSTIRQRSDVYNAKHAGENATWMADGTHWPGTWFEPADNHQRGKHAGIVQVLLNHPSCKPRLGLAASAENPVDFSGVDVRLPMLVYISREKRPGYNHQKKAGAMNVMLRVSALLSNAPFVINFDGDHYVNNSQAFRAPMCFMLDGRGRGGENTAFVQFPQRFDDVDPTDRYANHNRVFFDGTMLSLNGLQGPSYLGTGTMFRRVALYGVEPPRWGAAASQIKAMDIANKFGSSTSFVGTMLDGANQERSITPLAVLDESVAGDLAALTACAYEDGTSWGRDVGWVYNIATEDVVTGFRMHRQGWRSVYASVEPAAFRGTAPINLTERLYQILRWSGGSLEMFFSHSNALLAGRRLHPLQRVAYLNMSTYPIVTVFIFFYNLFPVMWLISEQYYIQRPFGEYLLYLVAVIAMIHVIGMFEVKWAGITLLDWCRNEQFYMIGSTGVYPTAVLYMALKLVTGKGIYFRLTSKQTTASSGDKFADLYTVRWVPLLIPTIVIIVVNVAAVGVAVGKAAAWGPLTEPGWLAVLGMVFNVWILVLLYPFALGVMGQWGKRPAVLFVAMAMAVAAVAAMYVAFGAPYQAELSGGAASLGKAAASLTGPSG.

Residues 34–53 (AGADGQNGRRSPVAKRVNDG) form a disordered region. The next 2 membrane-spanning stretches (helical) occupy residues 93-113 (ILHP…AFFA) and 123-143 (GVWL…SWVL). The active site involves aspartate 213. The stretch at 265–293 (ELMSDHRRVRREYEEFKVRIDSLSSTIRQ) forms a coiled coil. Aspartate 411 and aspartate 413 together coordinate substrate. The active site involves aspartate 579. 6 helical membrane-spanning segments follow: residues 655–675 (TYPI…MWLI), 685–705 (FGEY…IGMF), 723–743 (FYMI…ALKL), 777–797 (LLIP…VAVG), 811–831 (LAVL…PFAL), and 842–862 (AVLF…YVAF).

Belongs to the glycosyltransferase 2 family. Plant cellulose synthase-like F subfamily.

Its subcellular location is the golgi apparatus membrane. In terms of biological role, catalyzes both beta-1,3 and beta-1,4 glycosidic linkage on beta-D-glucan. Essential for (1,3;1,4)-beta-D-glucans synthesis in grasses and cereals (Poaceae). The mixed-linked glucans (which are not present in walls of dicotyledons or most other monocotyledonous plants) are particularly important constituents of the walls of the starchy endosperm and aleurone cells of cereal grains such as oats, wheat, rice and barley. They can account for up to 70% by weight of the wall. This chain is Mixed-linked glucan synthase 2 (CSLF2), found in Oryza sativa subsp. japonica (Rice).